The following is a 513-amino-acid chain: ATP synthase subunit alpha (513 aa).

169-176 (GDRQTGKT) lines the ATP pocket.

It belongs to the ATPase alpha/beta chains family. In terms of assembly, F-type ATPases have 2 components, CF(1) - the catalytic core - and CF(0) - the membrane proton channel. CF(1) has five subunits: alpha(3), beta(3), gamma(1), delta(1), epsilon(1). CF(0) has three main subunits: a(1), b(2) and c(9-12). The alpha and beta chains form an alternating ring which encloses part of the gamma chain. CF(1) is attached to CF(0) by a central stalk formed by the gamma and epsilon chains, while a peripheral stalk is formed by the delta and b chains.

Its subcellular location is the cell inner membrane. It carries out the reaction ATP + H2O + 4 H(+)(in) = ADP + phosphate + 5 H(+)(out). Its function is as follows. Produces ATP from ADP in the presence of a proton gradient across the membrane. The alpha chain is a regulatory subunit. This Salmonella paratyphi C (strain RKS4594) protein is ATP synthase subunit alpha.